The primary structure comprises 116 residues: MPRSVNHVASRARRKKILGLTKGYFGARKNVWTVAKNTWEKGLTYAYRDRKNKKRNFRALWIQRINAAARLEGMSYSKLMGALHKAGIEINRKVLADLAMNHPEAFKAIVAKAKAA.

Belongs to the bacterial ribosomal protein bL20 family.

Its function is as follows. Binds directly to 23S ribosomal RNA and is necessary for the in vitro assembly process of the 50S ribosomal subunit. It is not involved in the protein synthesizing functions of that subunit. The protein is Large ribosomal subunit protein bL20 of Phocaeicola vulgatus (strain ATCC 8482 / DSM 1447 / JCM 5826 / CCUG 4940 / NBRC 14291 / NCTC 11154) (Bacteroides vulgatus).